A 190-amino-acid polypeptide reads, in one-letter code: Xanthine phosphoribosyltransferase (190 aa).

Residues Leu20 and Asn27 each contribute to the xanthine site. 128-132 (ANGHA) contacts 5-phospho-alpha-D-ribose 1-diphosphate. Lys156 lines the xanthine pocket.

The protein belongs to the purine/pyrimidine phosphoribosyltransferase family. Xpt subfamily. Homodimer.

Its subcellular location is the cytoplasm. The enzyme catalyses XMP + diphosphate = xanthine + 5-phospho-alpha-D-ribose 1-diphosphate. It functions in the pathway purine metabolism; XMP biosynthesis via salvage pathway; XMP from xanthine: step 1/1. In terms of biological role, converts the preformed base xanthine, a product of nucleic acid breakdown, to xanthosine 5'-monophosphate (XMP), so it can be reused for RNA or DNA synthesis. This chain is Xanthine phosphoribosyltransferase, found in Pseudomonas paraeruginosa (strain DSM 24068 / PA7) (Pseudomonas aeruginosa (strain PA7)).